We begin with the raw amino-acid sequence, 846 residues long: Aminopeptidase N (846 aa).

Substrate-binding positions include Glu120 and 252 to 256; that span reads GAMEN. His288 provides a ligand contact to Zn(2+). Glu289 acts as the Proton acceptor in catalysis. Zn(2+)-binding residues include His292 and Glu311.

This sequence belongs to the peptidase M1 family. Monomer. Zn(2+) serves as cofactor.

It localises to the cytoplasm. It carries out the reaction Release of an N-terminal amino acid, Xaa-|-Yaa- from a peptide, amide or arylamide. Xaa is preferably Ala, but may be most amino acids including Pro (slow action). When a terminal hydrophobic residue is followed by a prolyl residue, the two may be released as an intact Xaa-Pro dipeptide.. In terms of biological role, aminopeptidase with broad substrate specificity to several peptides. It has more affinity for oligopeptides than for dipeptides. It plays an essential role in the metabolism, it may be involved in nitrogen supply or protein turnover. This is Aminopeptidase N (pepN) from Lactococcus lactis subsp. cremoris (Streptococcus cremoris).